Here is a 345-residue protein sequence, read N- to C-terminus: Protein RecA (345 aa).

68–75 serves as a coordination point for ATP; it reads GVESSGKT.

The protein belongs to the RecA family.

The protein resides in the cytoplasm. Can catalyze the hydrolysis of ATP in the presence of single-stranded DNA, the ATP-dependent uptake of single-stranded DNA by duplex DNA, and the ATP-dependent hybridization of homologous single-stranded DNAs. It interacts with LexA causing its activation and leading to its autocatalytic cleavage. This is Protein RecA from Aquifex aeolicus (strain VF5).